Here is a 399-residue protein sequence, read N- to C-terminus: Proteinase-activated receptor 2 (399 aa).

Residues 1 to 25 (MRSLSLAWLLGGITLLAASVSCSRT) form the signal peptide. The propeptide at 26 to 38 (ENLAPGRNNSKGR) is removed for receptor activation. Asparagine 33 carries N-linked (GlcNAc...) asparagine glycosylation. The Extracellular segment spans residues 39-73 (SLIGRLETQPPITGKGVPVEPGFSIDEFSASILTG). The chain crosses the membrane as a helical span at residues 74-103 (KLTTVFLPVVYIIVFVIGLPSNGMALWIFL). Over 104–110 (FRTKKKH) the chain is Cytoplasmic. Residues 111-139 (PAVIYMANLALADLLSVIWFPLKISYHLH) traverse the membrane as a helical segment. The Extracellular portion of the chain corresponds to 140 to 151 (GNNWVYGEALCK). Cysteine 150 and cysteine 228 are joined by a disulfide. A helical transmembrane segment spans residues 152–179 (VLIGFFYGNMYCSILFMTCLSVQRYWVI). At 180–185 (VNPMGH) the chain is on the cytoplasmic side. A helical membrane pass occupies residues 186 to 213 (PRKKANIAVGVSLAIWLLIFLVTIPLYV). The Extracellular segment spans residues 214 to 237 (MKQTIYIPALNITTCHDVLPEEVL). A glycan (N-linked (GlcNAc...) asparagine) is linked at asparagine 224. The chain crosses the membrane as a helical span at residues 238-271 (VGDMFNYFLSLAIGVFLFPALLTASAYVLMIKTL). Over 272–279 (RSSAMDEH) the chain is Cytoplasmic. A helical transmembrane segment spans residues 280–319 (SEKKRQRAIRLIITVLAMYFICFAPSNLLLVVHYFLIKTQ). The Extracellular portion of the chain corresponds to 320–325 (RQSHVY). Residues 326–349 (ALYLVALCLSTLNSCIDPFVYYFV) form a helical membrane-spanning segment. Over 350–399 (SKDFRDHARNALLCRSVRTVNRMQISLSSNKFSRKSGSYSSSSTSVKTSY) the chain is Cytoplasmic. Cysteine 363 carries the S-palmitoyl cysteine lipid modification.

It belongs to the G-protein coupled receptor 1 family. Interacts with TLR4, COPS5 and TMED2. Interacts with GNAQ, GNA11, GNA12, GNA13 and GNA14. A proteolytic cleavage generates a new N-terminus that functions as a tethered ligand. Activating serine proteases include trypsin, mast cell tryptase, coagulation factors VII and Xa, myeloblastin/PRTN3 and membrane-type serine protease 1/ST14. Proposed subsequent cleavage by serine proteases is leading to receptor deactivation and include neutrophil elastase and cathepsin G. At least in part, implicated proteases are also shown to activate the receptor; the glycosylation status of the receptor is thought to contribute to the difference. In terms of processing, N-glycosylated and sialylated. Post-translationally, multiple phosphorylated on serine and threonine residues in the cytoplasmic region upon receptor activation; required for receptor desensitization and recruitment of beta-arrestin. Monoubiquitinated by Cbl at the plasma membrane and in early endosomes; not required for receptor endocytosis but for translocation to late endosomes or lysosomes. Deubiquitination involves Stambp and Usp8; required for lysosomal trafficking and receptor degradation.

The protein localises to the cell membrane. In terms of biological role, receptor for trypsin and trypsin-like enzymes coupled to G proteins. Its function is mediated through the activation of several signaling pathways including phospholipase C (PLC), intracellular calcium, mitogen-activated protein kinase (MAPK), I-kappaB kinase/NF-kappaB and Rho. Can also be transactivated by cleaved F2r/Par1. Involved in modulation of inflammatory responses and regulation of innate and adaptive immunity, and acts as a sensor for proteolytic enzymes generated during infection. Generally is promoting inflammation. Can signal synergistically with Tlr4 and probably Tlr2 in inflammatory responses and modulates Tlr3 signaling. Has a protective role in establishing the endothelial barrier; the activity involves coagulation factor X. Regulates endothelial cell barrier integrity during neutrophil extravasation, probably following proteolytic cleavage by PRTN3. Proposed to have a bronchoprotective role in airway epithelium, but also shown to compromise the airway epithelial barrier by interrupting E-cadherin adhesion. Involved in the regulation of vascular tone; activation results in hypotension presumably mediated by vasodilation. Associates with a subset of G proteins alpha subunits such as GNAQ, GNA11, GNA14, GNA12 and GNA13, but probably not with G(o)-alpha, G(i) subunit alpha-1 and G(i) subunit alpha-2. Believed to be a class B receptor which internalizes as a complex with arrestin and traffic with it to endosomal vesicles, presumably as desensitized receptor, for extended periods of time. Mediates inhibition of TNF-alpha stimulated JNK phosphorylation via coupling to GNAQ and GNA11; the function involves dissociation of Ripk1 and Tradd from Tnfr1. Mediates phosphorylation of nuclear factor NF-kappa-B RELA subunit at 'Ser-536'; the function involves Ikbkb and is predominantly independent of G proteins. Involved in cellular migration. Involved in cytoskeletal rearrangement and chemotaxis through beta-arrestin-promoted scaffolds; the function is independent of GNAQ and GNA11 and involves promotion of cofilin dephosphorylation and actin filament severing. Induces redistribution of Cops5 from the plasma membrane to the cytosol and activation of the JNK cascade is mediated by Cops5. Involved in the recruitment of leukocytes to the sites of inflammation and is the major PAR receptor capable of modulating eosinophil function such as pro-inflammatory cytokine secretion, superoxide production and degranulation. During inflammation promotes dendritic cell maturation, trafficking to the lymph nodes and subsequent T-cell activation. Involved in antimicrobial response of innate immune cells; activation enhances phagocytosis of Gram-positive and killing of Gram-negative bacteria. Acts synergistically with interferon-gamma in enhancing antiviral responses. Mediates activation of pro-inflammatory and pro-fibrotic responses in fibroblasts, triggered by coagulation factor Xa (F10). Probably mediates activation of barrier protective signaling responses in endothelial cells, triggered by coagulation factor Xa (F10). The sequence is that of Proteinase-activated receptor 2 (F2rl1) from Mus musculus (Mouse).